A 431-amino-acid polypeptide reads, in one-letter code: tRNA(Ile)-lysidine synthase (431 aa).

Serine 19 to serine 24 is an ATP binding site.

The protein belongs to the tRNA(Ile)-lysidine synthase family.

It is found in the cytoplasm. The enzyme catalyses cytidine(34) in tRNA(Ile2) + L-lysine + ATP = lysidine(34) in tRNA(Ile2) + AMP + diphosphate + H(+). Its function is as follows. Ligates lysine onto the cytidine present at position 34 of the AUA codon-specific tRNA(Ile) that contains the anticodon CAU, in an ATP-dependent manner. Cytidine is converted to lysidine, thus changing the amino acid specificity of the tRNA from methionine to isoleucine. The polypeptide is tRNA(Ile)-lysidine synthase (Staphylococcus aureus (strain Mu50 / ATCC 700699)).